Consider the following 487-residue polypeptide: Glycogen synthase (487 aa).

Lysine 20 serves as a coordination point for ADP-alpha-D-glucose.

This sequence belongs to the glycosyltransferase 1 family. Bacterial/plant glycogen synthase subfamily.

It carries out the reaction [(1-&gt;4)-alpha-D-glucosyl](n) + ADP-alpha-D-glucose = [(1-&gt;4)-alpha-D-glucosyl](n+1) + ADP + H(+). It participates in glycan biosynthesis; glycogen biosynthesis. In terms of biological role, synthesizes alpha-1,4-glucan chains using ADP-glucose. The sequence is that of Glycogen synthase from Aliivibrio fischeri (strain ATCC 700601 / ES114) (Vibrio fischeri).